We begin with the raw amino-acid sequence, 212 residues long: ER lumen protein-retaining receptor 1 (212 aa).

The Lumenal segment spans residues Met1 to Phe4. Residues Arg5–Trp24 form a helical membrane-spanning segment. Residues Lys25 to Ile32 lie on the Cytoplasmic side of the membrane. The chain crosses the membrane as a helical span at residues Ser33–Phe52. The tract at residues Arg47–Tyr48 is interaction with the K-D-E-L motif on target proteins. Residues Thr53–Leu58 are Lumenal-facing. Residues Tyr59–Tyr79 form a helical membrane-spanning segment. Topologically, residues Ser80 to Thr92 are cytoplasmic. A helical membrane pass occupies residues Phe93–Asn110. Residues His111–Leu116 lie on the Lumenal side of the membrane. Residues Glu117–Leu135 traverse the membrane as a helical segment. Over Phe136 to Ser149 the chain is Cytoplasmic. Residues His150 to Trp168 form a helical membrane-spanning segment. The interaction with the K-D-E-L motif on target proteins stretch occupies residues Arg159–Arg169. Over Arg169–Leu178 the chain is Lumenal. The helical transmembrane segment at Ile179 to Ile199 threads the bilayer. Residues Thr200–Ala212 are Cytoplasmic-facing. Positions Lys204–Lys207 are important for recycling of cargo proteins with the sequence motif K-D-E-L from the Golgi to the endoplasmic reticulum. Ser209 is modified (phosphoserine; by PKA).

The protein belongs to the ERD2 family. As to quaternary structure, upon ligand binding the receptor oligomerizes and interacts with components of the transport machinery such as ARFGAP1 and ARF1. Phosphorylation by PKA at Ser-209 is required for endoplasmic reticulum retention function.

It is found in the golgi apparatus membrane. It localises to the cytoplasmic vesicle. The protein resides in the COPI-coated vesicle membrane. Its subcellular location is the endoplasmic reticulum membrane. The protein localises to the endoplasmic reticulum-Golgi intermediate compartment membrane. Its function is as follows. Receptor for the C-terminal sequence motif K-D-E-L that is present on endoplasmic reticulum resident proteins and that mediates their recycling from the Golgi back to the endoplasmic reticulum. The protein is ER lumen protein-retaining receptor 1 (KDELR1) of Bos taurus (Bovine).